The primary structure comprises 188 residues: UPF0301 protein azo3459 (188 aa).

This sequence belongs to the UPF0301 (AlgH) family.

This Azoarcus sp. (strain BH72) protein is UPF0301 protein azo3459.